The sequence spans 147 residues: Immunity protein YxxD (147 aa).

In terms of assembly, probably interacts with cognate toxin YxiD but not with other non-cognate toxins. The interaction inhibits the toxic activity of YxiD.

Its subcellular location is the cytoplasm. In terms of biological role, immunity component of one of 6 LXG toxin-immunity modules in this strain. They promote kin selection, mediate competition in biofilms, and drive spatial segregation of different strains, indicating that LXG toxins may help avoid warfare between strains in biofilms. Mediates intercellular competition during biofilm formation; disruption of the operon disadvantages the bacteria, but overexpression of the cognate immunity protein restores growth in competition with wild-type. In situ neutralizes the toxic effect of cognate toxin YxiD. Neutralizes the toxic activity of cognate toxin YxiD upon expression in E.coli. Does not have immunity protein activity on other LXG toxins. The polypeptide is Immunity protein YxxD (yxxD) (Bacillus subtilis (strain 168)).